The primary structure comprises 58 residues: UPF0391 membrane protein Sbal_1421 (58 aa).

Helical transmembrane passes span 6–26 (LVFLVVAVIAGLLGFTGIAGA) and 28–48 (AGIAKIIFLIFIVLLVISLLV).

Belongs to the UPF0391 family.

The protein localises to the cell membrane. This Shewanella baltica (strain OS155 / ATCC BAA-1091) protein is UPF0391 membrane protein Sbal_1421.